Consider the following 399-residue polypeptide: Formate-dependent phosphoribosylglycinamide formyltransferase (399 aa).

N(1)-(5-phospho-beta-D-ribosyl)glycinamide contacts are provided by residues 22-23 (EL) and Glu-82. Residues Arg-115, Lys-157, 162–167 (SSGKGQ), 197–200 (EAVV), and Glu-205 each bind ATP. The ATP-grasp domain occupies 120–315 (RLAAEELGLQ…EFELHARAIL (196 aa)). Mg(2+)-binding residues include Glu-274 and Glu-286. N(1)-(5-phospho-beta-D-ribosyl)glycinamide contacts are provided by residues Asp-293, Lys-362, and 369 to 370 (RR).

The protein belongs to the PurK/PurT family. Homodimer.

It carries out the reaction N(1)-(5-phospho-beta-D-ribosyl)glycinamide + formate + ATP = N(2)-formyl-N(1)-(5-phospho-beta-D-ribosyl)glycinamide + ADP + phosphate + H(+). Its pathway is purine metabolism; IMP biosynthesis via de novo pathway; N(2)-formyl-N(1)-(5-phospho-D-ribosyl)glycinamide from N(1)-(5-phospho-D-ribosyl)glycinamide (formate route): step 1/1. Its function is as follows. Involved in the de novo purine biosynthesis. Catalyzes the transfer of formate to 5-phospho-ribosyl-glycinamide (GAR), producing 5-phospho-ribosyl-N-formylglycinamide (FGAR). Formate is provided by PurU via hydrolysis of 10-formyl-tetrahydrofolate. The protein is Formate-dependent phosphoribosylglycinamide formyltransferase of Thioalkalivibrio sulfidiphilus (strain HL-EbGR7).